Reading from the N-terminus, the 769-residue chain is Integrin beta-2 (769 aa).

The first 22 residues, 1-22, serve as a signal peptide directing secretion; it reads MLRQRPQLLLLAGLLALQSVLS. Position 23 is a pyrrolidone carboxylic acid (glutamine 23). Over 23–700 the chain is Extracellular; that stretch reads QECTNYKVST…DMLECVKGPN (678 aa). Residues 24 to 74 enclose the PSI domain; it reads ECTNYKVSTCRDCIESGPGCAWCQKLNFTGQGEPDSIRCDTRAELLSKGCP. 28 disulfide bridges follow: cysteine 25/cysteine 43, cysteine 33/cysteine 447, cysteine 36/cysteine 62, cysteine 46/cysteine 73, cysteine 191/cysteine 198, cysteine 246/cysteine 286, cysteine 386/cysteine 400, cysteine 420/cysteine 445, cysteine 449/cysteine 467, cysteine 459/cysteine 470, cysteine 472/cysteine 481, cysteine 483/cysteine 514, cysteine 497/cysteine 512, cysteine 506/cysteine 517, cysteine 519/cysteine 534, cysteine 536/cysteine 559, cysteine 541/cysteine 557, cysteine 549/cysteine 562, cysteine 564/cysteine 573, cysteine 575/cysteine 598, cysteine 582/cysteine 596, cysteine 590/cysteine 601, cysteine 603/cysteine 612, cysteine 615/cysteine 618, cysteine 622/cysteine 662, cysteine 628/cysteine 647, cysteine 631/cysteine 643, and cysteine 670/cysteine 695. Residues asparagine 50 and asparagine 116 are each glycosylated (N-linked (GlcNAc...) asparagine). Positions 124–363 constitute a VWFA domain; that stretch reads GYPIDLYYLM…ELIKNAYNKL (240 aa). Residues serine 136 and serine 138 each contribute to the Mg(2+) site. Positions 138, 141, 142, and 173 each coordinate Ca(2+). The Ca(2+) site is built by asparagine 229, aspartate 231, proline 233, and glutamate 234. Glutamate 234 is a binding site for Mg(2+). Asparagine 254 carries an N-linked (GlcNAc...) asparagine glycan. Ca(2+) contacts are provided by aspartate 264 and glutamate 347. Positions 397–399 match the Cell attachment site motif; the sequence is RGD. I-EGF domains lie at 449-482, 483-535, 536-574, and 575-613; these read CRDA…KNCE, CQTQ…QFCE, CDNV…SACQ, and CLKS…PLCS. A glycan (N-linked (GlcNAc...) asparagine) is linked at asparagine 501. Asparagine 642 carries N-linked (GlcNAc...) asparagine glycosylation. Residues 701-723 form a helical membrane-spanning segment; the sequence is IAAIVGGTVGGVVLVGILLLVIW. The Cytoplasmic segment spans residues 724 to 769; the sequence is KALTHLSDLREYHRFEKEKLKSQWNNDNPLFKSATTTVMNPKFAES. Residues serine 745 and serine 756 each carry the phosphoserine modification. Residues threonine 758 and threonine 760 each carry the phosphothreonine modification.

The protein belongs to the integrin beta chain family. As to quaternary structure, heterodimer of an alpha and a beta subunit. The ITGB2 beta subunit associates with the ITGAL, ITGAM, ITGAX or ITGAD alpha subunits. Found in a complex with CD177 and ITGAM/CD11b. Interacts with FGR. Interacts with COPS5 and RANBP9. Interacts with FLNA (via filamin repeats 4, 9, 12, 17, 19, 21, and 23). Interacts with THBD. Both Ser-745 and Ser-756 become phosphorylated when T-cells are exposed to phorbol esters. Phosphorylation on Thr-758 (but not on Ser-756) allows interaction with 14-3-3 proteins.

It localises to the cell membrane. It is found in the membrane raft. Functionally, integrin ITGAL/ITGB2 is a receptor for ICAM1, ICAM2, ICAM3 and ICAM4. Integrin ITGAL/ITGB2 is also a receptor for the secreted form of ubiquitin-like protein ISG15; the interaction is mediated by ITGAL. Integrins ITGAM/ITGB2 and ITGAX/ITGB2 are receptors for the iC3b fragment of the third complement component and for fibrinogen. Integrin ITGAX/ITGB2 recognizes the sequence G-P-R in fibrinogen alpha-chain. Integrin ITGAM/ITGB2 recognizes P1 and P2 peptides of fibrinogen gamma chain. Integrin ITGAM/ITGB2 is also a receptor for factor X. Integrin ITGAD/ITGB2 is a receptor for ICAM3 and VCAM1. Contributes to natural killer cell cytotoxicity. Involved in leukocyte adhesion and transmigration of leukocytes including T-cells and neutrophils. Triggers neutrophil transmigration during lung injury through PTK2B/PYK2-mediated activation. Integrin ITGAL/ITGB2 in association with ICAM3, contributes to apoptotic neutrophil phagocytosis by macrophages. The sequence is that of Integrin beta-2 (ITGB2) from Bos taurus (Bovine).